We begin with the raw amino-acid sequence, 504 residues long: Probable GTP-binding protein OBGC2 (504 aa).

Residues 24–39 show a composition bias toward basic and acidic residues; that stretch reads AHRDARPALRLPELHA. 2 disordered regions span residues 24–46 and 93–122; these read AHRDARPALRLPELHATRRRRNN and VLAMPASPSTDAPKSPRRRSDKGKRSGVKK. An Obg domain is found at 73-276; that stretch reads HKYFDHAVVT…VSLELILRVV (204 aa). A compositionally biased stretch (basic residues) spans 107 to 122; sequence SPRRRSDKGKRSGVKK. In terms of domain architecture, OBG-type G spans 277–494; sequence ADVGLVGLPN…MLKEIRAALR (218 aa). Residues 283–290 and 337–341 each bind GTP; these read GLPNAGKS and DLPGL. Residues 436–452 are compositionally biased toward polar residues; sequence SEDSLNGNTGEHNTSSE. The tract at residues 436–463 is disordered; that stretch reads SEDSLNGNTGEHNTSSETKVEGGEKELR. Positions 453–463 are enriched in basic and acidic residues; it reads TKVEGGEKELR.

This sequence belongs to the TRAFAC class OBG-HflX-like GTPase superfamily. OBG GTPase family.

Functionally, may bind GTP and have GTPase activity. This is Probable GTP-binding protein OBGC2 from Oryza sativa subsp. japonica (Rice).